Reading from the N-terminus, the 37-residue chain is MKVRPSVKPICEKCKVIRRKGTVMVICENPKHKQKQG.

This sequence belongs to the bacterial ribosomal protein bL36 family.

The chain is Large ribosomal subunit protein bL36 from Halalkalibacterium halodurans (strain ATCC BAA-125 / DSM 18197 / FERM 7344 / JCM 9153 / C-125) (Bacillus halodurans).